Consider the following 176-residue polypeptide: MIELTKKITDTVALEKIDPARLKTLSLPLDARIKSRQKVQLTSGEGVGLFLERGTLLRGGDVLTNADGVLVKVLAANETVSTIVCSDALMLTKVAYHLGNRHVPLQIETGFVRYQHDHVLDDMVRQLPGADTCVDVQVEQAPFEPEAGAYQQGGGHSHGHAHSHSHEKPHSHTHNH.

The segment at 147 to 176 is disordered; sequence AGAYQQGGGHSHGHAHSHSHEKPHSHTHNH.

This sequence belongs to the UreE family.

It localises to the cytoplasm. Involved in urease metallocenter assembly. Binds nickel. Probably functions as a nickel donor during metallocenter assembly. The polypeptide is Urease accessory protein UreE (Alcanivorax borkumensis (strain ATCC 700651 / DSM 11573 / NCIMB 13689 / SK2)).